We begin with the raw amino-acid sequence, 310 residues long: Glycine--tRNA ligase alpha subunit (310 aa).

It belongs to the class-II aminoacyl-tRNA synthetase family. Tetramer of two alpha and two beta subunits.

Its subcellular location is the cytoplasm. The enzyme catalyses tRNA(Gly) + glycine + ATP = glycyl-tRNA(Gly) + AMP + diphosphate. The protein is Glycine--tRNA ligase alpha subunit of Agrobacterium fabrum (strain C58 / ATCC 33970) (Agrobacterium tumefaciens (strain C58)).